We begin with the raw amino-acid sequence, 87 residues long: Small ribosomal subunit protein bS20 (87 aa).

Positions 1–25 (MANIKSAKKRAVQSEKHRLHNASRR) are disordered.

It belongs to the bacterial ribosomal protein bS20 family.

Functionally, binds directly to 16S ribosomal RNA. In Baumannia cicadellinicola subsp. Homalodisca coagulata, this protein is Small ribosomal subunit protein bS20.